The chain runs to 332 residues: Autoinducer 2 import system permease protein LsrD (332 aa).

A run of 10 helical transmembrane segments spans residues 7-27 (YSWE…FGLI), 45-65 (ICIG…GMDI), 70-90 (TIGL…PLPL), 91-111 (AIII…GLII), 118-138 (LVIT…LSGM), 162-182 (FLGI…FWLL), 216-236 (VYAM…SYFG), 240-260 (SDLG…GGAN), 261-281 (IYGG…VGFL), and 288-308 (AGVP…VVVV).

Belongs to the binding-protein-dependent transport system permease family. AraH/RbsC subfamily. As to quaternary structure, the complex is composed of two ATP-binding proteins (LsrA), two transmembrane proteins (LsrC and LsrD) and a solute-binding protein (LsrB).

The protein localises to the cell inner membrane. Functionally, part of the ABC transporter complex LsrABCD involved in autoinducer 2 (AI-2) import. Probably responsible for the translocation of the substrate across the membrane. The polypeptide is Autoinducer 2 import system permease protein LsrD (lsrD) (Salmonella typhi).